Here is a 379-residue protein sequence, read N- to C-terminus: Lipid-A-disaccharide synthase (379 aa).

It belongs to the LpxB family.

The catalysed reaction is a lipid X + a UDP-2-N,3-O-bis[(3R)-3-hydroxyacyl]-alpha-D-glucosamine = a lipid A disaccharide + UDP + H(+). It functions in the pathway bacterial outer membrane biogenesis; LPS lipid A biosynthesis. In terms of biological role, condensation of UDP-2,3-diacylglucosamine and 2,3-diacylglucosamine-1-phosphate to form lipid A disaccharide, a precursor of lipid A, a phosphorylated glycolipid that anchors the lipopolysaccharide to the outer membrane of the cell. The protein is Lipid-A-disaccharide synthase of Idiomarina loihiensis (strain ATCC BAA-735 / DSM 15497 / L2-TR).